A 687-amino-acid chain; its full sequence is MTLKPSKRRKGRSRHSRKKQITSAILTEEGIMIKAKPSSPYTYANRMADKRSRSSIDNISRTSFQSNISRTSFQSNSDNNSIFETASLISCVTCLSDTDTIDRSETSTTDTSKDDLSANPKLHYPSVNGQLPANTVIPYGRILDARYIEKEPLHYYDANSSPSSPLSSSMSNISEKCDLDELESSQKKERKGNSLSRGSNSSSSLLTSRSPFTKLVEVIFARPRRHDVVPKRVSLYIDYKPHSSSHLKEEDDLVEEILKRSYKNTRRNKSIFVIINPFGGKGKAKKLFMTKAKPLLLASRCSIEVVYTKYPGHAIEIAREMDIDKYDTIACASGDGIPHEVINGLYQRPDHVKAFNNIAITEIPCGSGNAMSVSCHWTNNPSYSTLCLIKSIETRIDLMCCSQPSYAREHPKLSFLSQTYGLIAETDINTEFIRWMGPARFELGVAFNIIQKKKYPCEIYVKYAAKSKNELKNHYLEHKNKGSLEFQHITMNKDNEDCDNYNYENEYETENEDEDEDADADDEDSHLISRDLADSSADQIKEEDFKIKYPLDEGIPSDWERLDPNISNNLGIFYTGKMPYVAADTKFFPAALPSDGTMDMVITDARTSLTRMAPILLGLDKGSHVLQPEVLHSKILAYKIIPKLGNGLFSVDGEKFPLEPLQVEIMPRLCKTLLRNGRYVDTDFDSM.

The tract at residues 1–20 (MTLKPSKRRKGRSRHSRKKQ) is disordered. Residues Cys91 and Cys94 are each lipidated (S-palmitoyl cysteine; by AKR1). A compositionally biased stretch (basic and acidic residues) spans 101–116 (IDRSETSTTDTSKDDL). Disordered regions lie at residues 101-130 (IDRS…VNGQ) and 180-207 (DELE…SLLT). Low complexity predominate over residues 193–207 (NSLSRGSNSSSSLLT). One can recognise a DAGKc domain in the interval 266 to 405 (RRNKSIFVII…IDLMCCSQPS (140 aa)). Residues 276–278 (NPF) and Thr308 contribute to the ATP site. A substrate-binding site is contributed by 333 to 336 (SGDG). Residue Asp335 is the Proton donor/acceptor of the active site. ATP contacts are provided by residues Glu340, 366–368 (GSG), Arg434, and Arg440. Residues 506-524 (EYETENEDEDEDADADDED) show a composition bias toward acidic residues. The disordered stretch occupies residues 506-525 (EYETENEDEDEDADADDEDS). 652-654 (DGE) contacts ATP.

It is found in the golgi apparatus membrane. The enzyme catalyses (4R)-hydroxysphinganine + ATP = (4R)-hydroxysphinganine 1-phosphate + ADP + H(+). It carries out the reaction a sphingoid base + ATP = a sphingoid 1-phosphate + ADP + H(+). The catalysed reaction is sphinganine + ATP = sphinganine 1-phosphate + ADP + H(+). Functionally, catalyzes the phosphorylation of the sphingoid long chain bases dihydrosphingosine (DHS or sphinganine) and phytosphingosine (PHS) to form dihydrosphingosine 1-phosphate (DHS-1P) and phytosphingosine 1-phosphate (PHS-1P) respectively. Redundant to LCB4, is only responsible for few percent of the total activity. Involved in the biosynthesis of sphingolipids and ceramides. Involved in heat-induced transient cell cycle arrest. Accumulation of phosphorylated sphingoid long chain bases (LCBPs) stimulates calcium influx and activates calcineurin signaling. Involved in heat-stress resistance. This is Sphingoid long chain base kinase 5 (LCB5) from Saccharomyces cerevisiae (strain ATCC 204508 / S288c) (Baker's yeast).